A 388-amino-acid polypeptide reads, in one-letter code: 4-hydroxy-3-methylbut-2-en-1-yl diphosphate synthase (flavodoxin) (388 aa).

The [4Fe-4S] cluster site is built by C281, C284, C316, and E323.

Belongs to the IspG family. [4Fe-4S] cluster serves as cofactor.

The enzyme catalyses (2E)-4-hydroxy-3-methylbut-2-enyl diphosphate + oxidized [flavodoxin] + H2O + 2 H(+) = 2-C-methyl-D-erythritol 2,4-cyclic diphosphate + reduced [flavodoxin]. It participates in isoprenoid biosynthesis; isopentenyl diphosphate biosynthesis via DXP pathway; isopentenyl diphosphate from 1-deoxy-D-xylulose 5-phosphate: step 5/6. Converts 2C-methyl-D-erythritol 2,4-cyclodiphosphate (ME-2,4cPP) into 1-hydroxy-2-methyl-2-(E)-butenyl 4-diphosphate. The polypeptide is 4-hydroxy-3-methylbut-2-en-1-yl diphosphate synthase (flavodoxin) (Paenarthrobacter aurescens (strain TC1)).